The chain runs to 134 residues: Large ribosomal subunit protein bL20 (134 aa).

The protein belongs to the bacterial ribosomal protein bL20 family.

Binds directly to 23S ribosomal RNA and is necessary for the in vitro assembly process of the 50S ribosomal subunit. It is not involved in the protein synthesizing functions of that subunit. The polypeptide is Large ribosomal subunit protein bL20 (Sinorhizobium fredii (strain NBRC 101917 / NGR234)).